A 285-amino-acid polypeptide reads, in one-letter code: 2-dehydro-3-deoxyphosphooctonate aldolase (285 aa).

This sequence belongs to the KdsA family.

Its subcellular location is the cytoplasm. It catalyses the reaction D-arabinose 5-phosphate + phosphoenolpyruvate + H2O = 3-deoxy-alpha-D-manno-2-octulosonate-8-phosphate + phosphate. Its pathway is carbohydrate biosynthesis; 3-deoxy-D-manno-octulosonate biosynthesis; 3-deoxy-D-manno-octulosonate from D-ribulose 5-phosphate: step 2/3. It functions in the pathway bacterial outer membrane biogenesis; lipopolysaccharide biosynthesis. The protein is 2-dehydro-3-deoxyphosphooctonate aldolase of Acidovorax ebreus (strain TPSY) (Diaphorobacter sp. (strain TPSY)).